Consider the following 235-residue polypeptide: Kinetochore protein Spc25 (235 aa).

Positions K44–T106 form a coiled coil. Positions E193–N216 are disordered.

It belongs to the SPC25 family. As to quaternary structure, component of the Ndc80 complex, which is composed of Ndc80, Nuf2 and Spc25.

The protein resides in the nucleus. It is found in the chromosome. Its subcellular location is the centromere. The protein localises to the kinetochore. Its function is as follows. Acts as a component of the essential kinetochore-associated Ndc80 complex, which is required for chromosome segregation and spindle checkpoint activity during meiosis and mitosis. Required for kinetochore integrity and the organization of stable microtubule binding sites in the outer plate of the kinetochore. Participates in SAC signaling that responds specifically to disruptions in spindle microtubule dynamics. The NDC80 complex synergistically enhances the affinity of the SKA1 complex for microtubules and may allow the NDC80 complex to track depolymerizing microtubules. The protein is Kinetochore protein Spc25 of Drosophila pseudoobscura pseudoobscura (Fruit fly).